The following is a 312-amino-acid chain: Malate dehydrogenase (312 aa).

Residues 12–17 and aspartate 36 contribute to the NAD(+) site; that span reads GAGFTG. The substrate site is built by arginine 87 and arginine 93. Residues asparagine 100 and 123–125 contribute to the NAD(+) site; that span reads LTN. Asparagine 125 is a binding site for substrate. Phosphoserine is present on serine 149. A substrate-binding site is contributed by arginine 156. Histidine 180 (proton acceptor) is an active-site residue.

Belongs to the LDH/MDH superfamily. MDH type 3 family.

It catalyses the reaction (S)-malate + NAD(+) = oxaloacetate + NADH + H(+). Its function is as follows. Catalyzes the reversible oxidation of malate to oxaloacetate. The chain is Malate dehydrogenase from Geobacillus thermodenitrificans.